The primary structure comprises 345 residues: Protease HtpX homolog (345 aa).

2 helical membrane passes run T6–G26 and S27–N47. H130 contributes to the Zn(2+) binding site. E131 is a catalytic residue. H134 contacts Zn(2+). Helical transmembrane passes span L145–G165 and I179–I199. Zn(2+) is bound at residue E204.

It belongs to the peptidase M48B family. It depends on Zn(2+) as a cofactor.

It is found in the cell inner membrane. The polypeptide is Protease HtpX homolog (Bartonella henselae (strain ATCC 49882 / DSM 28221 / CCUG 30454 / Houston 1) (Rochalimaea henselae)).